A 178-amino-acid chain; its full sequence is CASP-like protein 5B1 (178 aa).

The Cytoplasmic portion of the chain corresponds to 1 to 37; the sequence is MDASNPIVHPIGDHHAVDLEEGPLIVTMKELPGMPGT. The chain crosses the membrane as a helical span at residues 38–58; that stretch reads IGGLALRVGQFLFAAAAIVIM. At 59 to 69 the chain is on the extracellular side; it reads VTGDEFTNYTA. The N-linked (GlcNAc...) asparagine glycan is linked to Asn-66. Residues 70-90 traverse the membrane as a helical segment; sequence FCYLVAAMSLQFLWSFMLAIL. The Cytoplasmic portion of the chain corresponds to 91–104; that stretch reads DTYALLIKRGLRNS. The chain crosses the membrane as a helical span at residues 105 to 125; it reads VLLSLFVVGDWVTATLSLAAA. Residues 126–154 lie on the Extracellular side of the membrane; sequence CSTAGVTVLFDNDLNYCGQMHCHRYQLSA. A helical transmembrane segment spans residues 155 to 175; that stretch reads AMAFLSWLLIGMSSLLTFWLW. Residues 176-178 are Cytoplasmic-facing; that stretch reads ASE.

It belongs to the Casparian strip membrane proteins (CASP) family. Homodimer and heterodimers.

It localises to the cell membrane. This is CASP-like protein 5B1 from Ginkgo biloba (Ginkgo).